Here is a 289-residue protein sequence, read N- to C-terminus: 33 kDa chaperonin (289 aa).

Disulfide bonds link cysteine 237-cysteine 239 and cysteine 270-cysteine 273.

It belongs to the HSP33 family. In terms of processing, under oxidizing conditions two disulfide bonds are formed involving the reactive cysteines. Under reducing conditions zinc is bound to the reactive cysteines and the protein is inactive.

Its subcellular location is the cytoplasm. Its function is as follows. Redox regulated molecular chaperone. Protects both thermally unfolding and oxidatively damaged proteins from irreversible aggregation. Plays an important role in the bacterial defense system toward oxidative stress. The protein is 33 kDa chaperonin of Oceanobacillus iheyensis (strain DSM 14371 / CIP 107618 / JCM 11309 / KCTC 3954 / HTE831).